Here is a 317-residue protein sequence, read N- to C-terminus: Lipase 1 (317 aa).

Positions M1 to G18 are cleaved as a signal peptide. Residue C19 is the site of N-palmitoyl cysteine attachment. C19 carries the S-diacylglycerol cysteine lipid modification. One can recognise an AB hydrolase-1 domain in the interval P69 to V296. H74 is a catalytic residue. S142 serves as the catalytic Nucleophile. Residues E270 and H292 each act as charge relay system in the active site.

Its subcellular location is the cell outer membrane. The enzyme catalyses a triacylglycerol + H2O = a diacylglycerol + a fatty acid + H(+). The protein is Lipase 1 (lip1) of Psychrobacter immobilis.